A 423-amino-acid polypeptide reads, in one-letter code: uncharacterized protein (423 aa).

Mg(2+)-binding residues include lysine 181, aspartate 183, and glutamate 184. At lysine 181 the chain carries N6-carboxylysine.

Belongs to the RuBisCO large chain family. Type IV subfamily. Mg(2+) is required as a cofactor.

Functionally, may be involved in sulfur metabolism and oxidative stress response. Does not show RuBisCO activity. This is an uncharacterized protein from Bordetella bronchiseptica (strain ATCC BAA-588 / NCTC 13252 / RB50) (Alcaligenes bronchisepticus).